Consider the following 359-residue polypeptide: Glyceraldehyde-3-phosphate dehydrogenase, glycosomal (359 aa).

NAD(+)-binding positions include 12–13, Asp38, Gln91, and Ser134; that span reads RI. Residues 165–167, Thr197, 226–227, and Arg249 each bind D-glyceraldehyde 3-phosphate; these read SCT and TG. The Nucleophile role is filled by Cys166. Asn335 contacts NAD(+). The Microbody targeting signal signature appears at 357–359; the sequence is ARL.

This sequence belongs to the glyceraldehyde-3-phosphate dehydrogenase family. As to quaternary structure, homotetramer.

The protein resides in the glycosome. It catalyses the reaction D-glyceraldehyde 3-phosphate + phosphate + NAD(+) = (2R)-3-phospho-glyceroyl phosphate + NADH + H(+). It functions in the pathway carbohydrate degradation; glycolysis; pyruvate from D-glyceraldehyde 3-phosphate: step 1/5. This is Glyceraldehyde-3-phosphate dehydrogenase, glycosomal from Trypanosoma cruzi.